A 184-amino-acid chain; its full sequence is Probable RNA 2'-phosphotransferase (184 aa).

This sequence belongs to the KptA/TPT1 family.

Functionally, removes the 2'-phosphate from RNA via an intermediate in which the phosphate is ADP-ribosylated by NAD followed by a presumed transesterification to release the RNA and generate ADP-ribose 1''-2''-cyclic phosphate (APPR&gt;P). May function as an ADP-ribosylase. The chain is Probable RNA 2'-phosphotransferase from Shigella boydii serotype 18 (strain CDC 3083-94 / BS512).